The primary structure comprises 427 residues: Type II methyltransferase M1.BsuMI (427 aa).

One can recognise an SAM-dependent MTase C5-type domain in the interval 84 to 427 (INIADLFSGC…SYLLALHQLR (344 aa)). Residue cysteine 176 is part of the active site.

Belongs to the class I-like SAM-binding methyltransferase superfamily. C5-methyltransferase family. As to quaternary structure, monomer. May form a complex with YdiP, also seems to be active alone.

The catalysed reaction is a 2'-deoxycytidine in DNA + S-adenosyl-L-methionine = a 5-methyl-2'-deoxycytidine in DNA + S-adenosyl-L-homocysteine + H(+). Somewhat inhibited by MgCl(2) and spermidine, strongly inhibited by MnCl(2). In terms of biological role, a methylase, recognizes the double-stranded sequence 5'-YTCGAR-3', methylates C-3 on both strands, and protects the DNA from cleavage by the BsuMI endonuclease. The chain is Type II methyltransferase M1.BsuMI (ydiO) from Bacillus subtilis (strain 168).